A 1025-amino-acid chain; its full sequence is Multidrug resistance protein MdtC (1025 aa).

Transmembrane regions (helical) follow at residues 3–23 (FFAL…AITL), 333–353 (EVEQ…FLFL), 360–380 (IIPA…MYLC), 387–407 (LSLM…IVVL), 431–451 (VGFT…PLLL), 463–483 (FAVT…TLTP), 528–548 (LVGV…ISIP), 853–873 (VILI…LYES), 875–895 (VHPL…LLAL), 897–917 (LFNA…IGIV), 953–973 (PIMM…LSGG), and 984–1004 (ITIV…TPVV).

It belongs to the resistance-nodulation-cell division (RND) (TC 2.A.6) family. MdtC subfamily. As to quaternary structure, part of a tripartite efflux system composed of MdtA, MdtB and MdtC. MdtC forms a heteromultimer with MdtB.

Its subcellular location is the cell inner membrane. The MdtABC tripartite complex confers resistance against novobiocin and deoxycholate. This Escherichia coli O8 (strain IAI1) protein is Multidrug resistance protein MdtC.